Consider the following 748-residue polypeptide: Photosystem I P700 chlorophyll a apoprotein A1 (748 aa).

Transmembrane regions (helical) follow at residues 69 to 92 (IFSAHFGQLAIIFIWLSGMYFHGA), 155 to 178 (LYVTALGGLGMAGLMIFAGWFHYH), 194 to 218 (LNHHLAGLLGLGSLSWAGHQIHVSL), 290 to 308 (VAHHHLAIAVLFLVAGHMY), 345 to 368 (WHANLAINLAMLGSLSIIVAHHMY), 384 to 410 (LSLFTHHMWIGGFCIVGAGAHAAIYMV), 432 to 454 (AIISHLNWVCIFLGMHSFGLYIH), and 529 to 547 (FMVHHIHAFTIHVTTLILL). Cysteine 571 and cysteine 580 together coordinate [4Fe-4S] cluster. 2 consecutive transmembrane segments (helical) span residues 587–608 (HVFLGLFWMYNALSIVIFHFSW) and 662–684 (LSAYGLMFLGAHFVWAFSLMFLF). Chlorophyll a' is bound at residue histidine 673. Chlorophyll a is bound by residues methionine 681 and tyrosine 689. Tryptophan 690 is a phylloquinone binding site. Residues 722 to 742 (AVGVAHYLLGGIATTWAFFLA) form a helical membrane-spanning segment.

This sequence belongs to the PsaA/PsaB family. The PsaA/B heterodimer binds the P700 chlorophyll special pair and subsequent electron acceptors. PSI consists of a core antenna complex that captures photons, and an electron transfer chain that converts photonic excitation into a charge separation. The eukaryotic PSI reaction center is composed of at least 11 subunits. The cofactor is P700 is a chlorophyll a/chlorophyll a' dimer, A0 is one or more chlorophyll a, A1 is one or both phylloquinones and FX is a shared 4Fe-4S iron-sulfur center..

The protein resides in the plastid. It localises to the chloroplast thylakoid membrane. It catalyses the reaction reduced [plastocyanin] + hnu + oxidized [2Fe-2S]-[ferredoxin] = oxidized [plastocyanin] + reduced [2Fe-2S]-[ferredoxin]. Functionally, psaA and PsaB bind P700, the primary electron donor of photosystem I (PSI), as well as the electron acceptors A0, A1 and FX. PSI is a plastocyanin/cytochrome c6-ferredoxin oxidoreductase, converting photonic excitation into a charge separation, which transfers an electron from the donor P700 chlorophyll pair to the spectroscopically characterized acceptors A0, A1, FX, FA and FB in turn. Oxidized P700 is reduced on the lumenal side of the thylakoid membrane by plastocyanin or cytochrome c6. In Cyanidioschyzon merolae (strain NIES-3377 / 10D) (Unicellular red alga), this protein is Photosystem I P700 chlorophyll a apoprotein A1.